Reading from the N-terminus, the 179-residue chain is DELTA-actitoxin-Afr1c (179 aa).

An N-terminal alpha-helix that contributes to the pore region spans residues 1–29 (SAEVAGAIIDGASLTFDVLQTVLKALGDV). The interval 11–30 (GASLTFDVLQTVLKALGDVS) is N-terminal region. Arginine 31 provides a ligand contact to an N-(acyl)-sphingosylphosphocholine. N-acetyl-D-glucosamine 6-sulfate-binding residues include tyrosine 51 and arginine 53. 12 residues coordinate an N-(acyl)-sphingosylphosphocholine: arginine 53, serine 54, arginine 79, glycine 85, tyrosine 113, serine 114, tryptophan 116, tyrosine 133, tyrosine 137, tyrosine 138, arginine 144, and glycine 168. Residues 105 to 120 (SIPFDYNLYSNWWNVK) are trp-rich region, which is important for the binding to lipid membrane. Position 138 (tyrosine 138) interacts with N-acetyl-D-glucosamine 6-sulfate. The Cell attachment site, crucial for protein stability signature appears at 144–146 (RGD).

It belongs to the actinoporin family. Sea anemone subfamily. As to quaternary structure, octamer or nonamer in membranes. Monomer in the soluble state.

It is found in the secreted. The protein resides in the nematocyst. Its subcellular location is the target cell membrane. In terms of biological role, pore-forming toxin (PFT) that consists of a crown-shaped octamer or nonamer that forms cation-selective hydrophilic pores of about 1.5 nm (inside) and 13 nm (outside) and causes cytolysis. It causes cardiac stimulation. Also causes hemolysis (HC(50)=0.3 nM). Interestingly, the Phe-16 is crucial for hemolysis. Pore formation is a multi-step process that involves specific recognition of membrane sphingomyelin (but neither cholesterol nor phosphatidylcholine) using aromatic rich region and adjacent phosphocholine (POC) binding site, firm binding to the membrane (mainly driven by hydrophobic interactions) accompanied by the transfer of the N-terminal region to the lipid-water interface and finally pore formation after oligomerization of monomers. It is probable that a dimeric form is an assembly intermediate before the complete oligomerization. The formation of stable pores occurs only in vesicles composed of DOPC/SM (there is no oligomerization when the PFT is treated with vesicles of DOPC or SM alone). The transmembrane pore displays 8 lateral perforations, one at each subunit-subunit interface, partially occupied by the acyl-chain region of a bridging lipid. Each pore contains 24 lipid molecules, firmly bound to each subunit, that is, 3 lipids (L1, L2, L3, L4 and/or L5) are associated to each subunit. Lipid L1 bridges 2 subunits, whereas lipids L2 and L3 bind to sites at single subunit. The protein is DELTA-actitoxin-Afr1c of Actinia fragacea (Strawberry anemone).